The sequence spans 971 residues: DNA-directed RNA polymerase subunit Rpo1N (971 aa).

Met1 bears the Blocked amino end (Met) mark. Zn(2+) contacts are provided by Cys62, Cys65, Cys72, His75, Cys102, Cys105, Cys149, and Cys152. A disordered region spans residues 185-204 (SMQPDEDEDDAGVSPQELAE). Positions 527, 529, and 531 each coordinate Mg(2+). Positions 951–971 (VEEPPTNLSEHGAAWEVESDD) are disordered.

The protein belongs to the RNA polymerase beta' chain family. In terms of assembly, part of the RNA polymerase complex. It depends on Mg(2+) as a cofactor. Zn(2+) serves as cofactor. Post-translationally, the N-terminus is blocked.

It localises to the cytoplasm. The enzyme catalyses RNA(n) + a ribonucleoside 5'-triphosphate = RNA(n+1) + diphosphate. DNA-dependent RNA polymerase (RNAP) catalyzes the transcription of DNA into RNA using the four ribonucleoside triphosphates as substrates. Forms the clamp head domain. The chain is DNA-directed RNA polymerase subunit Rpo1N from Halobacterium salinarum (strain ATCC 29341 / DSM 671 / R1).